The chain runs to 122 residues: uncharacterized protein (122 aa).

Residues 97 to 122 form a disordered region; sequence TSRNGFSNPNKDGKKNDDDNNSSSKS.

This is an uncharacterized protein from Mycoplasma genitalium (strain ATCC 33530 / DSM 19775 / NCTC 10195 / G37) (Mycoplasmoides genitalium).